The sequence spans 80 residues: Large ribosomal subunit protein uL24 (80 aa).

Belongs to the universal ribosomal protein uL24 family. In terms of assembly, part of the 50S ribosomal subunit.

One of two assembly initiator proteins, it binds directly to the 5'-end of the 23S rRNA, where it nucleates assembly of the 50S subunit. In terms of biological role, one of the proteins that surrounds the polypeptide exit tunnel on the outside of the subunit. This Chlorobaculum parvum (strain DSM 263 / NCIMB 8327) (Chlorobium vibrioforme subsp. thiosulfatophilum) protein is Large ribosomal subunit protein uL24.